The primary structure comprises 213 residues: Urease accessory protein UreG (213 aa).

14-21 (GPVGSGKT) lines the GTP pocket.

It belongs to the SIMIBI class G3E GTPase family. UreG subfamily. Homodimer. UreD, UreF and UreG form a complex that acts as a GTP-hydrolysis-dependent molecular chaperone, activating the urease apoprotein by helping to assemble the nickel containing metallocenter of UreC. The UreE protein probably delivers the nickel.

Its subcellular location is the cytoplasm. Its function is as follows. Facilitates the functional incorporation of the urease nickel metallocenter. This process requires GTP hydrolysis, probably effectuated by UreG. This Mesorhizobium japonicum (strain LMG 29417 / CECT 9101 / MAFF 303099) (Mesorhizobium loti (strain MAFF 303099)) protein is Urease accessory protein UreG.